The following is a 473-amino-acid chain: B box and SPRY domain-containing protein (473 aa).

The disordered stretch occupies residues 1–69 (MSADVSGTES…PKQGSERSQL (69 aa)). Positions 35-51 (KPGPGPEPRPESGPEPG) are enriched in pro residues. Residues 65 to 113 (ERSQLCPEHFEPLSWFCLSERRPVCATCAGFGGRCHRHRIRRAEEHAEE) form a B box-type zinc finger. Residues 259-455 (SPLLTQLWAA…ISIVRGPLAT (197 aa)) form the B30.2/SPRY domain.

In terms of assembly, interacts with YWHAZ/14-3-3 protein zeta. Interacts with TRPV5 and TRPV6. As to expression, according to PubMed:10978534, testis-specific. According to PubMed:16371431, broadly expressed.

The protein localises to the cytoplasm. It localises to the membrane. In terms of biological role, may regulate epithelial calcium transport by inhibiting TRPV5 activity. This chain is B box and SPRY domain-containing protein (Bspry), found in Mus musculus (Mouse).